We begin with the raw amino-acid sequence, 269 residues long: MNRIHAVILDWAGTTVDFGSFAPTQIFVEAFRQAFDVEITLAEARVPMGLGKWQHIEALGKLPAVDARWQAKFGRSMSAADIDAIYAAFMPLQIAKVIDFSSPIAGVIDTIAALRAEGIKIGSCSGYPRAVMERLVPAAAEHGYRPDHWVATDDLVAGGRPGPWMALQNVIALGIDAVAHCVKVDDAAPGISEGLNAGMWTVGLAVSGNEFGATWDAYQTMSKEDVAVRREHAASKLYAAGAHYVVDSLADLPEVIAHINARLAQGERP.

Aspartate 10 (nucleophile) is an active-site residue. Positions 10 and 12 each coordinate Mg(2+). Lysine 52 functions as the Schiff-base intermediate with substrate in the catalytic mechanism. Mg(2+) is bound at residue aspartate 186.

Belongs to the HAD-like hydrolase superfamily. PhnX family. As to quaternary structure, homodimer. The cofactor is Mg(2+).

It carries out the reaction phosphonoacetaldehyde + H2O = acetaldehyde + phosphate + H(+). Functionally, involved in phosphonate degradation. The polypeptide is Phosphonoacetaldehyde hydrolase (Salmonella agona (strain SL483)).